The primary structure comprises 97 residues: UPF0235 protein Aasi_0294 (97 aa).

This sequence belongs to the UPF0235 family.

The chain is UPF0235 protein Aasi_0294 from Amoebophilus asiaticus (strain 5a2).